The primary structure comprises 744 residues: MEYTHQSSWIIPFIPLPVPILIGVGLLFFPTATKNIRRMWVFPSIFLLTIVMIFSIDLSIHQINNSSIYQYVWSWTINNDLSLEFGYLIDSLTSIMSILITTVGILVLIYSDSYMSHDQSYLRFFTYLSFFNTSMLGLVTSSNLIQVYIFWELVGMCSYLLIGFWFTRPIAANACQKAFVTNRVGDFGLLLGILGFYWITGSLEFRDLFQIFNNLIYKNEVNIFFVTLCALLLFCGSVAKSAQFPLHVWLPDAMEGPTPISALIHAATMVAAGIFLVARLLPLFIVIPSIMSGIALIGIITVVLGATLAIAQKDIKKNLAYSTMSQLGYMILALGMGSYRAALFHLITHAYSKALLFLGSGSIIHSMEAIVGYSPDKSQNMVLMGGLTKHAPITKNAFLIGTLSLCGIPPFACFWSKDGILNDSWLYSPIFAIIACSTAGLTAFYMFRIYLLVFEGYLNVHFQHFNGKKNSSFYSISLWGKEEKKKLKKKIHLLALLTMNNNERTSFFQKRAYSHRINRNVKSIRRLFLDSTHFGIKNIGFFYPQESDNTMLFSMLVLVLFTFFVGSVGISFSQEGIDLDILSKLLIPSIDLLHQNSKNSVDWYEFFTNATFSVSIAFFGILIASFFYKPVFSSLQNLNLCNLFQKGLPKKIIADKIINIIYDWSYNRGYIDAFLEVSLIASVKKLAKFNYFFDRQIIDGIPNGVGISSFFMGEAIKYVGGGRISSYIFFFLLIFLVICYSIFI.

Helical transmembrane passes span 9–29 (WIIPFIPLPVPILIGVGLLFF), 40–60 (WVFPSIFLLTIVMIFSIDLSI), 89–109 (IDSLTSIMSILITTVGILVLI), 125–145 (FTYLSFFNTSMLGLVTSSNLI), 147–167 (VYIFWELVGMCSYLLIGFWFT), 185–205 (GDFGLLLGILGFYWITGSLEF), 219–239 (NEVNIFFVTLCALLLFCGSVA), 258–278 (TPISALIHAATMVAAGIFLVA), 280–300 (LLPLFIVIPSIMSGIALIGII), 327–347 (LGYMILALGMGSYRAALFHLI), 354–374 (ALLFLGSGSIIHSMEAIVGYS), 396–416 (NAFLIGTLSLCGIPPFACFWS), 425–445 (WLYSPIFAIIACSTAGLTAFY), 552–572 (LFSMLVLVLFTFFVGSVGISF), 612–632 (FSVSIAFFGILIASFFYKPVF), and 724–744 (ISSYIFFFLLIFLVICYSIFI).

This sequence belongs to the complex I subunit 5 family. In terms of assembly, NDH is composed of at least 16 different subunits, 5 of which are encoded in the nucleus.

The protein resides in the plastid. It is found in the chloroplast thylakoid membrane. The enzyme catalyses a plastoquinone + NADH + (n+1) H(+)(in) = a plastoquinol + NAD(+) + n H(+)(out). It carries out the reaction a plastoquinone + NADPH + (n+1) H(+)(in) = a plastoquinol + NADP(+) + n H(+)(out). Functionally, NDH shuttles electrons from NAD(P)H:plastoquinone, via FMN and iron-sulfur (Fe-S) centers, to quinones in the photosynthetic chain and possibly in a chloroplast respiratory chain. The immediate electron acceptor for the enzyme in this species is believed to be plastoquinone. Couples the redox reaction to proton translocation, and thus conserves the redox energy in a proton gradient. This Cicer arietinum (Chickpea) protein is NAD(P)H-quinone oxidoreductase subunit 5, chloroplastic (ndhF).